A 91-amino-acid polypeptide reads, in one-letter code: UPF0250 protein NMC1112 (91 aa).

It belongs to the UPF0250 family.

This is UPF0250 protein NMC1112 from Neisseria meningitidis serogroup C / serotype 2a (strain ATCC 700532 / DSM 15464 / FAM18).